Consider the following 158-residue polypeptide: NAD(P)H-quinone oxidoreductase subunit J, chloroplastic (158 aa).

Belongs to the complex I 30 kDa subunit family. As to quaternary structure, NDH is composed of at least 16 different subunits, 5 of which are encoded in the nucleus.

It localises to the plastid. The protein resides in the chloroplast thylakoid membrane. It catalyses the reaction a plastoquinone + NADH + (n+1) H(+)(in) = a plastoquinol + NAD(+) + n H(+)(out). The catalysed reaction is a plastoquinone + NADPH + (n+1) H(+)(in) = a plastoquinol + NADP(+) + n H(+)(out). NDH shuttles electrons from NAD(P)H:plastoquinone, via FMN and iron-sulfur (Fe-S) centers, to quinones in the photosynthetic chain and possibly in a chloroplast respiratory chain. The immediate electron acceptor for the enzyme in this species is believed to be plastoquinone. Couples the redox reaction to proton translocation, and thus conserves the redox energy in a proton gradient. This is NAD(P)H-quinone oxidoreductase subunit J, chloroplastic from Aethionema cordifolium (Lebanon stonecress).